We begin with the raw amino-acid sequence, 102 residues long: Protein Tat (102 aa).

The segment covering 1–10 (MEPVDPRLEP) has biased composition (basic and acidic residues). Residues 1–20 (MEPVDPRLEPWNHPGSQPKT) form a disordered region. The interaction with human CREBBP stretch occupies residues 1–24 (MEPVDPRLEPWNHPGSQPKTACNK). The interval 1-48 (MEPVDPRLEPWNHPGSQPKTACNKCYCKKCCYHCMCCFTKKGLGISYG) is transactivation. Residues cysteine 22, cysteine 25, and cysteine 27 each contribute to the Zn(2+) site. Residues 22–37 (CNKCYCKKCCYHCMCC) form a cysteine-rich region. At lysine 28 the chain carries N6-acetyllysine; by host PCAF. Positions 30, 33, 34, and 37 each coordinate Zn(2+). A core region spans residues 38–48 (FTKKGLGISYG). Residues 47–102 (YGRKKRSQRRRPPKSSKDHQDPIPEQPLSRQQPGDQTGQKKQKKALEGKTEADPCD) are disordered. Residues 48 to 60 (GRKKRSQRRRPPK) are compositionally biased toward basic residues. Positions 49 to 57 (RKKRSQRRR) match the Nuclear localization signal, RNA-binding (TAR), and protein transduction motif. Positions 49–87 (RKKRSQRRRPPKSSKDHQDPIPEQPLSRQQPGDQTGQKK) are interaction with the host capping enzyme RNGTT. An N6-acetyllysine; by host EP300 and GCN5L2 mark is found at lysine 50 and lysine 51. Residue arginine 52 is modified to Asymmetric dimethylarginine; by host PRMT6. A compositionally biased stretch (polar residues) spans 74-85 (LSRQQPGDQTGQ). Over residues 90 to 102 (KALEGKTEADPCD) the composition is skewed to basic and acidic residues.

This sequence belongs to the lentiviruses Tat family. As to quaternary structure, interacts with host CCNT1. Associates with the P-TEFb complex composed at least of Tat, P-TEFb (CDK9 and CCNT1), TAR RNA, RNA Pol II. Recruits the HATs CREBBP, TAF1/TFIID, EP300, PCAF and GCN5L2. Interacts with host KAT5/Tip60; this interaction targets the latter to degradation. Interacts with the host deacetylase SIRT1. Interacts with host capping enzyme RNGTT; this interaction stimulates RNGTT. Binds to host KDR, and to the host integrins ITGAV/ITGB3 and ITGA5/ITGB1. Interacts with host KPNB1/importin beta-1 without previous binding to KPNA1/importin alpha-1. Interacts with EIF2AK2. Interacts with host nucleosome assembly protein NAP1L1; this interaction may be required for the transport of Tat within the nucleus, since the two proteins interact at the nuclear rim. Interacts with host C1QBP/SF2P32; this interaction involves lysine-acetylated Tat. Interacts with the host chemokine receptors CCR2, CCR3 and CXCR4. Interacts with host DPP4/CD26; this interaction may trigger an anti-proliferative effect. Interacts with host LDLR. Interacts with the host extracellular matrix metalloproteinase MMP1. Interacts with host PRMT6; this interaction mediates Tat's methylation. Interacts with, and is ubiquitinated by MDM2/Hdm2. Interacts with host PSMC3 and HTATIP2. Interacts with STAB1; this interaction may overcome SATB1-mediated repression of IL2 and IL2RA (interleukin) in T cells by binding to the same domain than HDAC1. Interacts (when acetylated) with human CDK13, thereby increasing HIV-1 mRNA splicing and promoting the production of the doubly spliced HIV-1 protein Nef. Interacts with host TBP; this interaction modulates the activity of transcriptional pre-initiation complex. Interacts with host RELA. Interacts with host PLSCR1; this interaction negatively regulates Tat transactivation activity by altering its subcellular distribution. Post-translationally, asymmetrical arginine methylation by host PRMT6 seems to diminish the transactivation capacity of Tat and affects the interaction with host CCNT1. Acetylation by EP300, CREBBP, GCN5L2/GCN5 and PCAF regulates the transactivation activity of Tat. EP300-mediated acetylation of Lys-50 promotes dissociation of Tat from the TAR RNA through the competitive binding to PCAF's bromodomain. In addition, the non-acetylated Tat's N-terminus can also interact with PCAF. PCAF-mediated acetylation of Lys-28 enhances Tat's binding to CCNT1. Lys-50 is deacetylated by SIRT1. In terms of processing, polyubiquitination by host MDM2 does not target Tat to degradation, but activates its transactivation function and fosters interaction with CCNT1 and TAR RNA. Post-translationally, phosphorylated by EIF2AK2 on serine and threonine residues adjacent to the basic region important for TAR RNA binding and function. Phosphorylation of Tat by EIF2AK2 is dependent on the prior activation of EIF2AK2 by dsRNA.

The protein localises to the host nucleus. The protein resides in the host nucleolus. It is found in the host cytoplasm. It localises to the secreted. Transcriptional activator that increases RNA Pol II processivity, thereby increasing the level of full-length viral transcripts. Recognizes a hairpin structure at the 5'-LTR of the nascent viral mRNAs referred to as the transactivation responsive RNA element (TAR) and recruits the cyclin T1-CDK9 complex (P-TEFb complex) that will in turn hyperphosphorylate the RNA polymerase II to allow efficient elongation. The CDK9 component of P-TEFb and other Tat-activated kinases hyperphosphorylate the C-terminus of RNA Pol II that becomes stabilized and much more processive. Other factors such as HTATSF1/Tat-SF1, SUPT5H/SPT5, and HTATIP2 are also important for Tat's function. Besides its effect on RNA Pol II processivity, Tat induces chromatin remodeling of proviral genes by recruiting the histone acetyltransferases (HATs) CREBBP, EP300 and PCAF to the chromatin. This also contributes to the increase in proviral transcription rate, especially when the provirus integrates in transcriptionally silent region of the host genome. To ensure maximal activation of the LTR, Tat mediates nuclear translocation of NF-kappa-B by interacting with host RELA. Through its interaction with host TBP, Tat may also modulate transcription initiation. Tat can reactivate a latently infected cell by penetrating in it and transactivating its LTR promoter. In the cytoplasm, Tat is thought to act as a translational activator of HIV-1 mRNAs. Its function is as follows. Extracellular circulating Tat can be endocytosed by surrounding uninfected cells via the binding to several surface receptors such as CD26, CXCR4, heparan sulfate proteoglycans (HSPG) or LDLR. Neurons are rarely infected, but they internalize Tat via their LDLR. Through its interaction with nuclear HATs, Tat is potentially able to control the acetylation-dependent cellular gene expression. Modulates the expression of many cellular genes involved in cell survival, proliferation or in coding for cytokines or cytokine receptors. Tat plays a role in T-cell and neurons apoptosis. Tat induced neurotoxicity and apoptosis probably contribute to neuroAIDS. Circulating Tat also acts as a chemokine-like and/or growth factor-like molecule that binds to specific receptors on the surface of the cells, affecting many cellular pathways. In the vascular system, Tat binds to ITGAV/ITGB3 and ITGA5/ITGB1 integrins dimers at the surface of endothelial cells and competes with bFGF for heparin-binding sites, leading to an excess of soluble bFGF. The chain is Protein Tat from Human immunodeficiency virus type 1 group N (isolate YBF106) (HIV-1).